Reading from the N-terminus, the 973-residue chain is GATOR2 complex protein WDR59 (973 aa).

6 WD repeats span residues 57–98 (QSKW…GEVC), 103–143 (GHTR…KPTV), 146–185 (SAVAGASQVKWNKKNANCLATSHDGDVRIWDKRKPSTAVE), 189–229 (AHLS…KYLN), 232–276 (PCQV…TPVH), and 280–324 (GHDD…QRLC). Residues 346 to 365 (DKALQPQDSEPQHSSGHGDE) are disordered. The segment covering 351-360 (PQDSEPQHSS) has biased composition (polar residues). One can recognise an RWD domain in the interval 393-494 (QEFSLINVQI…RQLVSWLESV (102 aa)). The C4-type zinc finger occupies 900-920 (YCSHCRSEARGTQCAICKGFT). Positions 901, 904, 913, 916, 926, 937, 942, 945, 948, 959, 963, 965, and 967 each coordinate Zn(2+). The RING-type; atypical zinc finger occupies 921–970 (FQCAICHVAVRGSSNFCLTCGHGGHTSHMMEWFRTQEVCPTGCGCHCLLE).

It belongs to the WD repeat WDR59 family. As to quaternary structure, component of the GATOR2 subcomplex, composed of MIOS, SEC13, SEH1L, WDR24 and WDR59. The GATOR2 complex interacts with CASTOR1 and CASTOR2; the interaction is negatively regulated by arginine. The GATOR2 complex interacts with SESN1, SESN2 and SESN3; the interaction is negatively regulated by amino acids. Interacts with DDB1-CUL4A/B E3 ligase complexes.

It localises to the lysosome membrane. Its activity is regulated as follows. The GATOR2 complex is negatively regulated by the upstream amino acid sensors CASTOR1 and SESN2, which sequester the GATOR2 complex in absence of amino acids. In the presence of abundant amino acids, GATOR2 is released from CASTOR1 and SESN2 and activated. As a component of the GATOR2 complex, functions as an activator of the amino acid-sensing branch of the mTORC1 signaling pathway. The GATOR2 complex indirectly activates mTORC1 through the inhibition of the GATOR1 subcomplex. GATOR2 probably acts as an E3 ubiquitin-protein ligase toward GATOR1. In the presence of abundant amino acids, the GATOR2 complex mediates ubiquitination of the NPRL2 core component of the GATOR1 complex, leading to GATOR1 inactivation. In the absence of amino acids, GATOR2 is inhibited, activating the GATOR1 complex. The polypeptide is GATOR2 complex protein WDR59 (Gallus gallus (Chicken)).